The chain runs to 235 residues: Casparian strip membrane protein 2 (235 aa).

A disordered region spans residues 1–46 (MSGSDTSGSVHVDEHGHGKASSSYDGAGAPAPAPAPFQGHRKAGSG). Residues 1-67 (MSGSDTSGSV…GSGGDGLRRC (67 aa)) are Cytoplasmic-facing. The helical transmembrane segment at 68-88 (LGLIDFVLRVAAFGPTLAAAI) threads the bilayer. Residues 89-115 (SIGTSDERLSVFTNYFQFRARFDDFPA) lie on the Extracellular side of the membrane. A helical membrane pass occupies residues 116-136 (FEFFIVANAIAAGYMVLSLPF). At 137-150 (SAATIMSSKATGVK) the chain is on the cytoplasmic side. A helical transmembrane segment spans residues 151-171 (LLLLICDTIMVGLLTAAASAA). The Extracellular segment spans residues 172–203 (AAMVYVAHEGNLRANWVPICLQFHGFCQRTSG). Residues 204 to 224 (AVIASFLAVFVLMVLIVMAAF) traverse the membrane as a helical segment. Residues 225-235 (TMPRRTHHTAS) are Cytoplasmic-facing.

It belongs to the Casparian strip membrane proteins (CASP) family. As to quaternary structure, homodimer and heterodimers.

It is found in the cell membrane. Regulates membrane-cell wall junctions and localized cell wall deposition. Required for establishment of the Casparian strip membrane domain (CSD) and the subsequent formation of Casparian strips, a cell wall modification of the root endodermis that determines an apoplastic barrier between the intraorganismal apoplasm and the extraorganismal apoplasm and prevents lateral diffusion. This is Casparian strip membrane protein 2 from Oryza sativa subsp. indica (Rice).